A 526-amino-acid polypeptide reads, in one-letter code: MVHWADYMAEKIIRERGDKEEYVVESGITPSGYVHIGNFREFFTAYIVGHALRDRGKRVRHIHMWDDYDRFRKVPKNVPPEWKEHLTKPVREVPDPWGCHESYADHFMSLFEEEISKLGIEADFLHASELYKSGEYAKEIRLALEKRDEIKAILDKYRERAKQPPLEDSWQPVMIYCPHCRKEAEFVSWDGEWKVSYKCPHCGAEGETDIREGNVKLRWRVDWPMRWAHFKVDFEPAGKDHLAAGSSYDTGKEIVEKVFGWKAPLTLMYEFVGIKGQKGKMSGSKGNVILLSDLYEVLEPGIIRFIYAKARPNKELRIDLGLGLLNLYDEFDRVERIYFGLEHAKNPEEEEELKRTYELSMPKLPERLVAQAPFRFLVTLVQMPHLDEDGIIRILQEQGHVPENLTDDDIERIKLRIRLAKNWVEKYAPDDVKFSLLERPPEIELRPEIREAMLEVAEWLEEHERFSVDELNNVIFDAAKKRGIPSKEWFKALYNIFIGKDRGPRLAPFLASLNREFVIKRLRLEG.

The 'HIGH' region motif lies at 30–38 (PSGYVHIGN). 6 residues coordinate Zn(2+): Asp-95, Cys-99, His-100, His-106, Cys-177, and Cys-199. The 'KMSKS' region signature appears at 280 to 284 (KMSGS).

Belongs to the class-I aminoacyl-tRNA synthetase family. Requires Zn(2+) as cofactor.

Its subcellular location is the cytoplasm. The enzyme catalyses tRNA(Lys) + L-lysine + ATP = L-lysyl-tRNA(Lys) + AMP + diphosphate. The protein is Lysine--tRNA ligase (lysS) of Thermococcus kodakarensis (strain ATCC BAA-918 / JCM 12380 / KOD1) (Pyrococcus kodakaraensis (strain KOD1)).